The following is a 372-amino-acid chain: Lipoyl synthase, mitochondrial (372 aa).

Residues Cys-103, Cys-108, Cys-114, Cys-134, Cys-138, Cys-141, and Ser-349 each contribute to the [4Fe-4S] cluster site. The region spanning 119–338 (EHGTQTATIM…EERGNQLGFL (220 aa)) is the Radical SAM core domain.

Belongs to the radical SAM superfamily. Lipoyl synthase family. The cofactor is [4Fe-4S] cluster.

The protein localises to the mitochondrion. It carries out the reaction [[Fe-S] cluster scaffold protein carrying a second [4Fe-4S](2+) cluster] + N(6)-octanoyl-L-lysyl-[protein] + 2 oxidized [2Fe-2S]-[ferredoxin] + 2 S-adenosyl-L-methionine + 4 H(+) = [[Fe-S] cluster scaffold protein] + N(6)-[(R)-dihydrolipoyl]-L-lysyl-[protein] + 4 Fe(3+) + 2 hydrogen sulfide + 2 5'-deoxyadenosine + 2 L-methionine + 2 reduced [2Fe-2S]-[ferredoxin]. It functions in the pathway protein modification; protein lipoylation via endogenous pathway; protein N(6)-(lipoyl)lysine from octanoyl-[acyl-carrier-protein]: step 2/2. Its function is as follows. Catalyzes the radical-mediated insertion of two sulfur atoms into the C-6 and C-8 positions of the octanoyl moiety bound to the lipoyl domains of lipoate-dependent enzymes, thereby converting the octanoylated domains into lipoylated derivatives. The protein is Lipoyl synthase, mitochondrial of Drosophila willistoni (Fruit fly).